We begin with the raw amino-acid sequence, 239 residues long: Small ribosomal subunit protein uS2 (239 aa).

This sequence belongs to the universal ribosomal protein uS2 family.

This Parasynechococcus marenigrum (strain WH8102) protein is Small ribosomal subunit protein uS2.